The chain runs to 127 residues: Glycine cleavage system H protein (127 aa).

The 82-residue stretch at 24-105 (TLTIGITDLA…AYDAWLFKIK (82 aa)) folds into the Lipoyl-binding domain. N6-lipoyllysine is present on Lys65.

The protein belongs to the GcvH family. As to quaternary structure, the glycine cleavage system is composed of four proteins: P, T, L and H. The cofactor is (R)-lipoate.

In terms of biological role, the glycine cleavage system catalyzes the degradation of glycine. The H protein shuttles the methylamine group of glycine from the P protein to the T protein. In Ralstonia nicotianae (strain ATCC BAA-1114 / GMI1000) (Ralstonia solanacearum), this protein is Glycine cleavage system H protein.